A 327-amino-acid polypeptide reads, in one-letter code: MSQLTEIVEQALAAIEGTEDLKALDELRVDYLGKKGKITDMMKMMGKLSPAEKPAFGQAVNQAKQAVQKQLSERIDNLKAKELEAQLVAESIDVSLPGRRIDNGGLHPVTRTIERIETFFGELGFSVKEGPEIEDDFHNFDALNISEHHPARADHDTFYFNPKVMLRTQTSGVQIRTMENEKPPLRIISPGRVYRNDYDQTHTPMFHQVEGLLVAENVNFAELKGILHDFLRNFFEEDLEVRFRPSYFPFTEPSAEVDVMGKNGKWLEVLGCGMVHPNVLRSVGIDPEKYSGFAFGMGVERLSMLRYGVNDLRSFFENDLRFLKQFK.

A Mg(2+)-binding site is contributed by glutamate 252.

The protein belongs to the class-II aminoacyl-tRNA synthetase family. Phe-tRNA synthetase alpha subunit type 1 subfamily. As to quaternary structure, tetramer of two alpha and two beta subunits. Mg(2+) serves as cofactor.

Its subcellular location is the cytoplasm. It catalyses the reaction tRNA(Phe) + L-phenylalanine + ATP = L-phenylalanyl-tRNA(Phe) + AMP + diphosphate + H(+). The sequence is that of Phenylalanine--tRNA ligase alpha subunit from Shewanella sediminis (strain HAW-EB3).